The following is a 24-amino-acid chain: Chaperonin GroEL (24 aa).

The protein belongs to the chaperonin (HSP60) family. In terms of assembly, forms a cylinder of 14 subunits composed of two heptameric rings stacked back-to-back. Interacts with the co-chaperonin GroES.

It is found in the cytoplasm. It catalyses the reaction ATP + H2O + a folded polypeptide = ADP + phosphate + an unfolded polypeptide.. In terms of biological role, together with its co-chaperonin GroES, plays an essential role in assisting protein folding. The GroEL-GroES system forms a nano-cage that allows encapsulation of the non-native substrate proteins and provides a physical environment optimized to promote and accelerate protein folding. The sequence is that of Chaperonin GroEL from Acinetobacter calcoaceticus.